A 588-amino-acid polypeptide reads, in one-letter code: ustiloxin B cluster transcription factor ustR (588 aa).

A DNA-binding region (zn(2)-C6 fungal-type) is located at residues 11–38 (CWTCRLRRKKCNEDGQPCSNCEARGVFC). Positions 68 to 92 (RTRRARATPTNSINGEPRRPSIDMN) are disordered.

It is found in the nucleus. Functionally, transcription factor that regulates the expression of the gene cluster that mediates the biosynthesis of ustiloxin B, an antimitotic tetrapeptide. The protein is ustiloxin B cluster transcription factor ustR of Aspergillus flavus (strain ATCC 200026 / FGSC A1120 / IAM 13836 / NRRL 3357 / JCM 12722 / SRRC 167).